Consider the following 58-residue polypeptide: KLHPLVMLNISDHLTKALMDINESPVYVLLNPTINHAQKKMLNSRIRVLHQYLGSMQK.

It belongs to the peptidase M67A family. CSN6 subfamily. Component of the CSN complex, probably composed of CSN1, CSN2, CSN3, CSN4, CSN5 (CSN5A or CSN5B), CSN6 (CSN6A or CSN6B), CSN7 and CSN8.

The protein resides in the cytoplasm. It is found in the nucleus. Functionally, component of the COP9 signalosome complex (CSN), a complex involved in various cellular and developmental processes such as photomorphogenesis and auxin and jasmonate responses. The CSN complex is an essential regulator of the ubiquitin (Ubl) conjugation pathway by mediating the deneddylation of the cullin subunits of SCF-type E3 ligase complexes, leading to decrease the Ubl ligase activity of SCF. It is involved in repression of photomorphogenesis in darkness by regulating the activity of COP1-containing Ubl ligase complexes. This Brassica oleracea (Wild cabbage) protein is COP9 signalosome complex subunit 6b (CSN6B).